We begin with the raw amino-acid sequence, 464 residues long: Argininosuccinate lyase (464 aa).

This sequence belongs to the lyase 1 family. Argininosuccinate lyase subfamily.

It localises to the cytoplasm. It catalyses the reaction 2-(N(omega)-L-arginino)succinate = fumarate + L-arginine. It functions in the pathway amino-acid biosynthesis; L-arginine biosynthesis; L-arginine from L-ornithine and carbamoyl phosphate: step 3/3. In Chlorobium phaeobacteroides (strain DSM 266 / SMG 266 / 2430), this protein is Argininosuccinate lyase.